The following is a 556-amino-acid chain: Formate--tetrahydrofolate ligase (556 aa).

65 to 72 (TPAGEGKT) is an ATP binding site.

Belongs to the formate--tetrahydrofolate ligase family.

It catalyses the reaction (6S)-5,6,7,8-tetrahydrofolate + formate + ATP = (6R)-10-formyltetrahydrofolate + ADP + phosphate. The protein operates within one-carbon metabolism; tetrahydrofolate interconversion. The polypeptide is Formate--tetrahydrofolate ligase (Alkaliphilus oremlandii (strain OhILAs) (Clostridium oremlandii (strain OhILAs))).